A 382-amino-acid chain; its full sequence is Ustilagic acid biosynthesis cluster protein orf2 (382 aa).

Polar residues predominate over residues methionine 1–proline 20. The segment at methionine 1 to tyrosine 22 is disordered.

It functions in the pathway secondary metabolite biosynthesis. Functionally, part of the gene cluster that mediates the biosynthesis of the glycolipid biosurfactant ustilagic acid (UA). UA is a secreted cellobiose glycolipid that is toxic for many microorganisms and confers biocontrol activity to U.maydis. UA consists of 15,16-dihydroxypalmitic or 2,15,16-trihydroxypalmitic acid, which is O-glycosidically linked to cellobiose at its terminal hydroxyl group. In addition, the cellobiose moiety is acetylated and acylated with a short-chain hydroxy fatty acid. UA biosynthesis starts with omega-hydroxylation of palmitic acid catalyzed by the cytochrome P450 monooxygenase cyp1. Terminal hydroxylation of palmitic acid precedes subterminal hydroxylation catalyzed by the cytochrome P450 monooxygenase cyp2. Sequential glucosylation of the hydroxy fatty acid is probably catalyzed by the glycosyltransferase ugt1. The cellobiose lipid is further decorated by acetylation of the proximal glucose residue and by acylation with a short-chain beta-hydroxy fatty acid at the distal glucose residue. The acyltransferase uat1 may be a good candidate for catalyzing either acetylation or acylation of the cellobiose lipid. The fatty acid synthase fas2 may be involved in synthesis of the carbon backbone of the short-chain beta-hydroxy fatty acid esterified to the cellobiose disaccharide. The secreted UA consists of a mixture of both alpha-hydroxylated and non-hydroxylated glycolipids; therefore, alpha-hydroxylation of the long-chain fatty, catalyzed by the fatty acid hydroxylase ahd1, occurs late in UA biosynthesis and may be the last step before secretion. The protein is Ustilagic acid biosynthesis cluster protein orf2 of Mycosarcoma maydis (Corn smut fungus).